Here is a 554-residue protein sequence, read N- to C-terminus: MESQTTFKYESLAFTKLSHCQWTDYFLSVPIDESELDVITREIDILKPEVMELLSSQGDDETSKRKVLLIQLLLSLGLAFHFENEIKNILEHAFRKIDDITGDEKDLSTISIMFRVFRTYGHNLPSSVFKRFTGDDGKFQQSLTEDAKGILSLYEAAHLGTTTDYILDEALKFTSSHLKSLLAGGTCRPHILRLIRNTLYLPQRWNMEAVIAREYISFYEQEEDHDKMLLRLAKLNFKLLQLHYIKELKSFIKWWMELGLTSKWPSQFRERIVEAWLAGLMMYFEPQFSGGRVIAAKFNYLLTILDDACDHYFSIHELTRLVACVERWSPDGIDTLEDISRSVFKLMLDVFDDIGKGVRSEGSSYHLKEMLEELNTLVRANLDLVKWARGIQVPSFEEHVEVGGIALTSYATLMYSFVGMGETAGKEAYEWVRSRPRLIKSLAAKGRLMDDITDFDSDMSNGFAANAINYYMKQFVVTKEEAILECQRMIVDINKTINEELLKTTSVPGRVLKQALNFGRLLELLYTKSDDIYNCSEGKLKEYIVTLLIDPIRL.

Positions 306, 310, 450, and 458 each coordinate Mg(2+). Positions 306 to 310 match the DDXXD motif motif; sequence DDACD.

The protein belongs to the terpene synthase family. Tpsa subfamily. Mg(2+) is required as a cofactor. Requires Mn(2+) as cofactor. In terms of tissue distribution, predominantly expressed in roots. Expressed in the cortex and the sub-epidermal layers of roots. Also detected in leaf hydathodes and flower stigmata.

It is found in the cytoplasm. It carries out the reaction (2E,6E)-farnesyl diphosphate = (Z)-gamma-bisabolene + diphosphate. The protein operates within secondary metabolite biosynthesis; terpenoid biosynthesis. Involved in sesquiterpene (C15) biosynthesis. The major product is (Z)-gamma-bisabolene with minor amounts of (E)-nerolidol and alpha-bisabolol. The sequence is that of (Z)-gamma-bisabolene synthase 1 (TPS12) from Arabidopsis thaliana (Mouse-ear cress).